A 409-amino-acid polypeptide reads, in one-letter code: Torsin-4A (409 aa).

Residues 1 to 16 (MGEQDPSDRLRGDQLK) are compositionally biased toward basic and acidic residues. Disordered stretches follow at residues 1 to 28 (MGEQDPSDRLRGDQLKEPNQNGKGSFSQ) and 75 to 99 (DNLHEPVNSNPASPRKRKKKRKGRV). Over residues 17–28 (EPNQNGKGSFSQ) the composition is skewed to polar residues. Basic residues predominate over residues 88-98 (PRKRKKKRKGR). Residues 120 to 136 (CLYLLCIIVFLQVYNAI) traverse the membrane as a helical segment. Residue 192-199 (GPTGVGKS) participates in ATP binding.

This sequence belongs to the ClpA/ClpB family. Torsin subfamily.

The protein resides in the membrane. In Danio rerio (Zebrafish), this protein is Torsin-4A (tor4a).